A 421-amino-acid chain; its full sequence is 26S proteasome non-ATPase regulatory subunit 11A (421 aa).

The 165-residue stretch at 227–391 (AYSYFYEAFE…GVLIVFDEPP (165 aa)) folds into the PCI domain.

It belongs to the proteasome subunit S9 family. As to quaternary structure, component of the lid subcomplex of the 19S proteasome regulatory particle complex (also named PA700 complex). The 26S proteasome consists of a 20S proteasome core and two 19S regulatory subunits.

It localises to the nucleus. The protein localises to the cytoplasm. Its subcellular location is the cytosol. Its function is as follows. Component of the lid subcomplex of the 26S proteasome, a multiprotein complex involved in the ATP-dependent degradation of ubiquitinated proteins. In the complex, psmd11a is required for proteasome assembly. The chain is 26S proteasome non-ATPase regulatory subunit 11A (psmd11a) from Danio rerio (Zebrafish).